A 499-amino-acid chain; its full sequence is MKKKYILAIDQGTTSSRAILFDHKGRIIGMAQREFTQIFPQPGWVEHNPRDIMTSVYTTITELLNNTQIDVRAIAGIGITNQRETTVIWDRQTGQPIYNAIVWQSRQTKDICDQLTTAGYQDMVHAKTGLLIDAYFSGTKVKWILDHVENAHTQAARGELAFGTIDTWIIWNLTGGQVHVTDYSNASRTLLYDIHALRWDPDLLTMLDIPAAILPDVRSSSEIYGLTQTPYFHGEQIPIAGIAGDQQAALFGQACFEPGMAKNTYGTGCFMLMHTGKKAVESQNGLLTTIAWGLNGEIEYALEGSIFIAGSVVQWLRDGLRMFGKASDSQAYADRVSDNGGVYVVPAFVGLGAPYWRSDVRGAVFGLTRSTTKEHFVRAALESMAYQTRDVLSAMQADADIELKELRTDGAAITNDFMAQFQSDILAVPVLRSQIAETTALGAAYLAGLATGFWSSREEMTQHWAINRCFKPQMDKEQREHLYAGWKQAVEATLGFRVA.

Thr-13 is a binding site for ADP. Thr-13, Thr-14, and Ser-15 together coordinate ATP. Thr-13 provides a ligand contact to sn-glycerol 3-phosphate. Residue Arg-17 participates in ADP binding. Sn-glycerol 3-phosphate contacts are provided by Arg-83, Glu-84, Tyr-135, and Asp-245. Glycerol-binding residues include Arg-83, Glu-84, Tyr-135, Asp-245, and Gln-246. ADP is bound by residues Thr-267 and Gly-310. Residues Thr-267, Gly-310, Gln-314, and Ala-411 each coordinate ATP. ADP is bound by residues Ala-411 and Asn-415.

It belongs to the FGGY kinase family.

The catalysed reaction is glycerol + ATP = sn-glycerol 3-phosphate + ADP + H(+). It functions in the pathway polyol metabolism; glycerol degradation via glycerol kinase pathway; sn-glycerol 3-phosphate from glycerol: step 1/1. With respect to regulation, inhibited by fructose 1,6-bisphosphate (FBP). Its function is as follows. Key enzyme in the regulation of glycerol uptake and metabolism. Catalyzes the phosphorylation of glycerol to yield sn-glycerol 3-phosphate. This chain is Glycerol kinase, found in Xylella fastidiosa (strain M23).